We begin with the raw amino-acid sequence, 387 residues long: Ferrochelatase (387 aa).

Fe cation-binding residues include histidine 196 and glutamate 277.

This sequence belongs to the ferrochelatase family.

The protein resides in the cytoplasm. It carries out the reaction heme b + 2 H(+) = protoporphyrin IX + Fe(2+). It participates in porphyrin-containing compound metabolism; protoheme biosynthesis; protoheme from protoporphyrin-IX: step 1/1. Catalyzes the ferrous insertion into protoporphyrin IX. In Synechococcus sp. (strain RCC307), this protein is Ferrochelatase.